Consider the following 43-residue polypeptide: Protein PsbN (43 aa).

A helical membrane pass occupies residues 5–27 (TLVTIFISGSLVSFTGYALYTAF).

The protein belongs to the PsbN family.

It localises to the plastid. It is found in the chloroplast thylakoid membrane. Functionally, may play a role in photosystem I and II biogenesis. The polypeptide is Protein PsbN (Piper cenocladum (Ant piper)).